The chain runs to 258 residues: Regulatory protein RecX (258 aa).

Belongs to the RecX family.

The protein localises to the cytoplasm. In terms of biological role, modulates RecA activity. This chain is Regulatory protein RecX, found in Streptococcus uberis (strain ATCC BAA-854 / 0140J).